We begin with the raw amino-acid sequence, 58 residues long: UPF0339 protein Msl4696 (58 aa).

Belongs to the UPF0339 family.

This is UPF0339 protein Msl4696 from Mesorhizobium japonicum (strain LMG 29417 / CECT 9101 / MAFF 303099) (Mesorhizobium loti (strain MAFF 303099)).